The chain runs to 61 residues: Small ribosomal subunit protein bS21 (61 aa).

The segment at 34–61 is disordered; it reads KREHYESPSVKRKKKSEAARKRKYKYNK. Over residues 43-61 the composition is skewed to basic residues; it reads VKRKKKSEAARKRKYKYNK.

This sequence belongs to the bacterial ribosomal protein bS21 family.

This Thermoanaerobacter pseudethanolicus (strain ATCC 33223 / 39E) (Clostridium thermohydrosulfuricum) protein is Small ribosomal subunit protein bS21.